Here is a 122-residue protein sequence, read N- to C-terminus: Large ribosomal subunit protein uL14 (122 aa).

The protein belongs to the universal ribosomal protein uL14 family. Part of the 50S ribosomal subunit. Forms a cluster with proteins L3 and L19. In the 70S ribosome, L14 and L19 interact and together make contacts with the 16S rRNA in bridges B5 and B8.

Functionally, binds to 23S rRNA. Forms part of two intersubunit bridges in the 70S ribosome. This Nitratiruptor sp. (strain SB155-2) protein is Large ribosomal subunit protein uL14.